We begin with the raw amino-acid sequence, 868 residues long: Muscle, skeletal receptor tyrosine-protein kinase (868 aa).

The signal sequence occupies residues 1–21 (MRELVNIPLLQMLTLVAFSGT). Topologically, residues 22–494 (EKLPKAPVIT…FAVSPAYSMT (473 aa)) are extracellular. Ig-like domains are found at residues 28–116 (PVIT…GALQ), 121–205 (PKIT…KLVK), and 212–302 (ARIL…ATVS). 3 disulfides stabilise this stretch: Cys-49–Cys-99, Cys-98–Cys-112, and Cys-142–Cys-190. An N-linked (GlcNAc...) asparagine glycan is attached at Asn-222. 6 disulfide bridges follow: Cys-233–Cys-282, Cys-317–Cys-382, Cys-325–Cys-375, Cys-366–Cys-406, Cys-394–Cys-447, and Cys-398–Cys-434. The 139-residue stretch at 312–450 (DSQGYCAQYR…HRDPTACTRL (139 aa)) folds into the FZ domain. Asn-338 carries N-linked (GlcNAc...) asparagine glycosylation. An N-linked (GlcNAc...) asparagine glycan is attached at Asn-459. The chain crosses the membrane as a helical span at residues 495 to 515 (VIISIVSSFALFALLTIATLY). The Cytoplasmic segment spans residues 516–868 (CCRRRKEWKN…CERAEGTVGV (353 aa)). Tyr-553 is modified (phosphotyrosine; by autocatalysis). The Protein kinase domain occupies 574–855 (IEYVRDIGEG…PSFCSIHRIL (282 aa)). Residues 580–588 (IGEGAFGRV) and Lys-608 contribute to the ATP site. Phosphoserine; by CK2 occurs at positions 680 and 697. The Proton acceptor role is filled by Asp-724. Position 754 is a phosphotyrosine; by autocatalysis (Tyr-754).

Belongs to the protein kinase superfamily. Tyr protein kinase family. Monomer. Homodimer. Interacts with LRP4; the heterodimer forms an AGRIN receptor complex that binds AGRIN resulting in activation of MUSK. Forms a heterotetramer composed of 2 DOK7 and 2 MUSK molecules which facilitates MUSK trans-autophosphorylation on tyrosine residue and activation. Interacts (via cytoplasmic part) with DOK7 (via IRS-type PTB domain); requires MUSK phosphorylation. Interacts with DVL1 (via DEP domain); the interaction is direct and mediates the formation of a DVL1, MUSK and PAK1 ternary complex involved in AChR clustering. Interacts with PDZRN3; this interaction is enhanced by agrin. Interacts with FNTA; the interaction is direct and mediates AGRIN-induced phosphorylation and activation of FNTA. Interacts with CSNK2B; mediates regulation by CK2. Interacts (via the cytoplasmic domain) with DNAJA3. Interacts with NSF; may regulate MUSK endocytosis and activity. Interacts with CAV3; may regulate MUSK signaling. Interacts with RNF31. Mg(2+) is required as a cofactor. In terms of processing, ubiquitinated by PDZRN3. Ubiquitination promotes endocytosis and lysosomal degradation. Post-translationally, phosphorylated. Phosphorylation is induced by AGRIN. Autophosphorylated. Autophosphorylation at Tyr-553 is required for interaction with DOK7 which in turn stimulates the phosphorylation and the activation of MUSK. Neddylated. In terms of tissue distribution, expressed preferentially in skeletal muscle.

Its subcellular location is the postsynaptic cell membrane. It carries out the reaction L-tyrosyl-[protein] + ATP = O-phospho-L-tyrosyl-[protein] + ADP + H(+). With respect to regulation, positively regulated by CK2. In terms of biological role, receptor tyrosine kinase which plays a central role in the formation and the maintenance of the neuromuscular junction (NMJ), the synapse between the motor neuron and the skeletal muscle. Recruitment of AGRIN by LRP4 to the MUSK signaling complex induces phosphorylation and activation of MUSK, the kinase of the complex. The activation of MUSK in myotubes regulates the formation of NMJs through the regulation of different processes including the specific expression of genes in subsynaptic nuclei, the reorganization of the actin cytoskeleton and the clustering of the acetylcholine receptors (AChR) in the postsynaptic membrane. May regulate AChR phosphorylation and clustering through activation of ABL1 and Src family kinases which in turn regulate MUSK. DVL1 and PAK1 that form a ternary complex with MUSK are also important for MUSK-dependent regulation of AChR clustering. May positively regulate Rho family GTPases through FNTA. Mediates the phosphorylation of FNTA which promotes prenylation, recruitment to membranes and activation of RAC1 a regulator of the actin cytoskeleton and of gene expression. Other effectors of the MUSK signaling include DNAJA3 which functions downstream of MUSK. May also play a role within the central nervous system by mediating cholinergic responses, synaptic plasticity and memory formation. In Mus musculus (Mouse), this protein is Muscle, skeletal receptor tyrosine-protein kinase (Musk).